A 466-amino-acid chain; its full sequence is Methylenetetrahydrofolate--tRNA-(uracil-5-)-methyltransferase TrmFO (466 aa).

14 to 19 (GGGLAG) is an FAD binding site.

This sequence belongs to the MnmG family. TrmFO subfamily. FAD serves as cofactor.

The protein resides in the cytoplasm. It carries out the reaction uridine(54) in tRNA + (6R)-5,10-methylene-5,6,7,8-tetrahydrofolate + NADH + H(+) = 5-methyluridine(54) in tRNA + (6S)-5,6,7,8-tetrahydrofolate + NAD(+). The catalysed reaction is uridine(54) in tRNA + (6R)-5,10-methylene-5,6,7,8-tetrahydrofolate + NADPH + H(+) = 5-methyluridine(54) in tRNA + (6S)-5,6,7,8-tetrahydrofolate + NADP(+). Its function is as follows. Catalyzes the folate-dependent formation of 5-methyl-uridine at position 54 (M-5-U54) in all tRNAs. This is Methylenetetrahydrofolate--tRNA-(uracil-5-)-methyltransferase TrmFO from Brucella melitensis biotype 1 (strain ATCC 23456 / CCUG 17765 / NCTC 10094 / 16M).